Consider the following 166-residue polypeptide: Alanine racemase (166 aa).

The active-site Proton acceptor; specific for L-alanine is the Tyr62. Met110 is a binding site for substrate.

The protein belongs to the alanine racemase family. Pyridoxal 5'-phosphate is required as a cofactor.

The catalysed reaction is L-alanine = D-alanine. The protein operates within amino-acid biosynthesis; D-alanine biosynthesis; D-alanine from L-alanine: step 1/1. Its function is as follows. Catalyzes the interconversion of L-alanine and D-alanine. May also act on other amino acids. The sequence is that of Alanine racemase (alr) from Piscirickettsia salmonis.